The sequence spans 96 residues: MMRRLAVLVLAVAMVAACGGGVVGVAGASCNAGQLTVCAGAIAGGARPTAACCSSLRAQQGCFCQFAKDPRYGRYVNSPNARKAVSSCGIALPTCH.

An N-terminal signal peptide occupies residues Met1–Gly27. 4 disulfides stabilise this stretch: Cys30/Cys62, Cys38/Cys52, Cys53/Cys88, and Cys64/Cys95.

This sequence belongs to the plant LTP family. B11E subfamily.

Functionally, transfer lipids across membranes. May play a role in plant defense or in the biosynthesis of cuticle layers. This Oryza sativa subsp. indica (Rice) protein is Non-specific lipid-transfer protein 2 (LTP-2).